The chain runs to 518 residues: MDESKKISLGQFFTPTHIVKYMIGLMTKNKNASILEPSSGNGVFLDSLIQLGYTNLTSYEIDGDIISHPFVINSSFITSYDKPQYDSIIGNPPYVRWKNLSELQKKELKDNSIWKMYCNSLCDYFYIFIIKSILQLKVGGELIFICPDYFFSTKNAEGLRKFLINNGSFEKIILFNESKVFHGVSSSVVIFKYIKGKNIDNINIINIDSKSPIKSEDIESLGESYYIPRFSSSDVWVTSPNHIKVALDKFESYCKTIKKVQPKSLFDDLEFSRIGSVCDIGNGMVSGLDKAFQMNDINYSELELLNSICVAKAKHLDAFCFSGYTRYKFILDDINEDKLITYFPNFFYEFNNYKDYLLKRYSYNKYLPYWKWAFLRNFSLFSKNEKKIFVPCKERISKKSNFRFSLVDEFIYPTQDVTALYKKENVKESIEYITAYLNSKAVFLWMKYKGVVKGNVVEFSEKPLANIPFRRIDWQLKSEKKIHDDITNLVRKYLSNKEFSILHEINLNLEKLGIKVEI.

It belongs to the N(4)/N(6)-methyltransferase family.

It carries out the reaction a 2'-deoxyadenosine in DNA + S-adenosyl-L-methionine = an N(6)-methyl-2'-deoxyadenosine in DNA + S-adenosyl-L-homocysteine + H(+). Functionally, a gamma subtype methylase, recognizes the double-stranded sequence 5'-GTYRAC-3', methylates A-5 on both strands, and protects the DNA from cleavage by the HindII endonuclease. This chain is Type II methyltransferase M.HindII (hindIIM), found in Haemophilus influenzae (strain ATCC 51907 / DSM 11121 / KW20 / Rd).